Consider the following 390-residue polypeptide: Endoglucanase gh5-1 (390 aa).

Residues 1–16 (MKATILASTFAAGALA) form the signal peptide. Residues 17–52 (QSGAWGQCGGNGWSGATSCISGYACNYVNDWYSQCQ) form the CBM1 domain. N-linked (GlcNAc...) asparagine glycosylation is found at Asn-157 and Asn-261.

This sequence belongs to the glycosyl hydrolase 5 (cellulase A) family. In terms of processing, N-glycosylated.

The protein localises to the secreted. The enzyme catalyses Endohydrolysis of (1-&gt;4)-beta-D-glucosidic linkages in cellulose, lichenin and cereal beta-D-glucans.. In terms of biological role, endoglucanase that plays an important role in biomass degradation. Binds onto plant cell walls to participate in the hydrolysis of cellulose. The protein is Endoglucanase gh5-1 of Neurospora crassa (strain ATCC 24698 / 74-OR23-1A / CBS 708.71 / DSM 1257 / FGSC 987).